Reading from the N-terminus, the 120-residue chain is Membrane-anchored ubiquitin-fold protein 4 (120 aa).

A Ubiquitin-like domain is found at 7 to 73 (VELKFRLYDG…LENGKTVAQC (67 aa)). Cys-115 is lipidated: S-palmitoyl cysteine. Position 117 is a cysteine methyl ester (Cys-117). Cys-117 carries the S-farnesyl cysteine lipid modification. Residues 118 to 120 (TIM) constitute a propeptide, removed in mature form.

As to expression, ubiquitous.

It is found in the cell membrane. May serve as docking site to facilitate the association of other proteins to the plasma membrane. This Arabidopsis thaliana (Mouse-ear cress) protein is Membrane-anchored ubiquitin-fold protein 4 (MUB4).